The primary structure comprises 376 residues: Queuine tRNA-ribosyltransferase (376 aa).

Asp-90 acts as the Proton acceptor in catalysis. Substrate contacts are provided by residues 90-94, Asp-144, Gln-193, and Gly-220; that span reads DSGGF. Positions 251–257 are RNA binding; it reads GVGTPED. Residue Asp-270 is the Nucleophile of the active site. The RNA binding; important for wobble base 34 recognition stretch occupies residues 275–279; it reads TRNAR. Zn(2+) is bound by residues Cys-308, Cys-310, Cys-313, and His-339.

Belongs to the queuine tRNA-ribosyltransferase family. In terms of assembly, homodimer. Within each dimer, one monomer is responsible for RNA recognition and catalysis, while the other monomer binds to the replacement base PreQ1. Requires Zn(2+) as cofactor.

The catalysed reaction is 7-aminomethyl-7-carbaguanine + guanosine(34) in tRNA = 7-aminomethyl-7-carbaguanosine(34) in tRNA + guanine. It participates in tRNA modification; tRNA-queuosine biosynthesis. Its function is as follows. Catalyzes the base-exchange of a guanine (G) residue with the queuine precursor 7-aminomethyl-7-deazaguanine (PreQ1) at position 34 (anticodon wobble position) in tRNAs with GU(N) anticodons (tRNA-Asp, -Asn, -His and -Tyr). Catalysis occurs through a double-displacement mechanism. The nucleophile active site attacks the C1' of nucleotide 34 to detach the guanine base from the RNA, forming a covalent enzyme-RNA intermediate. The proton acceptor active site deprotonates the incoming PreQ1, allowing a nucleophilic attack on the C1' of the ribose to form the product. After dissociation, two additional enzymatic reactions on the tRNA convert PreQ1 to queuine (Q), resulting in the hypermodified nucleoside queuosine (7-(((4,5-cis-dihydroxy-2-cyclopenten-1-yl)amino)methyl)-7-deazaguanosine). The chain is Queuine tRNA-ribosyltransferase from Cupriavidus taiwanensis (strain DSM 17343 / BCRC 17206 / CCUG 44338 / CIP 107171 / LMG 19424 / R1) (Ralstonia taiwanensis (strain LMG 19424)).